The primary structure comprises 228 residues: 5'(3')-deoxyribonucleotidase, mitochondrial (228 aa).

The transit peptide at 1-31 directs the protein to the mitochondrion; sequence MIRLGGWCARRLCSAAVPAGRRGAAGGLGLA. Asp-41 acts as the Nucleophile in catalysis. Mg(2+) is bound by residues Asp-41 and Asp-43. Asp-43 serves as the catalytic Proton donor. Substrate-binding residues include Asp-43, Phe-49, Phe-75, Trp-76, Val-77, Trp-96, Thr-130, and Lys-165. Residue Asp-176 coordinates Mg(2+).

It belongs to the 5'(3')-deoxyribonucleotidase family. Homodimer. It depends on Mg(2+) as a cofactor. Highly expressed in heart, brain and skeletal muscle. Detected at very low levels in kidney and pancreas.

It localises to the mitochondrion. Dephosphorylates specifically the 5' and 2'(3')-phosphates of uracil and thymine deoxyribonucleotides, and so protects mitochondrial DNA replication from excess dTTP. Has only marginal activity towards dIMP and dGMP. This is 5'(3')-deoxyribonucleotidase, mitochondrial (NT5M) from Homo sapiens (Human).